A 181-amino-acid chain; its full sequence is Putative J domain-containing protein R266 (181 aa).

The 65-residue stretch at 6–70 folds into the J domain; the sequence is NYYQILDVDN…LKRLNYDSYL (65 aa).

The sequence is that of Putative J domain-containing protein R266 from Acanthamoeba polyphaga (Amoeba).